We begin with the raw amino-acid sequence, 327 residues long: Gonadotropin-releasing hormone receptor (327 aa).

Residues 1 to 37 lie on the Extracellular side of the membrane; the sequence is MASASPEQNQNHCSAVNNSNMLMQGNLPTLTLSGKIR. An N-linked (GlcNAc...) asparagine glycan is attached at Asn-17. Residues 38–57 traverse the membrane as a helical segment; that stretch reads VTVTFFLFLLSTIFNASFLL. At 58–76 the chain is on the cytoplasmic side; that stretch reads KLQKWTQKKEKGKKLSRMK. A helical transmembrane segment spans residues 77–96; it reads VLLKHLTLANLLETLIVMPL. Residues 97–114 lie on the Extracellular side of the membrane; the sequence is DGMWNITVQWYAGEFLCK. Asn-101 carries N-linked (GlcNAc...) asparagine glycosylation. Cys-113 and Cys-195 are joined by a disulfide. A helical transmembrane segment spans residues 115 to 136; the sequence is VLSYLKLFSMYAPAFMMVVISL. At 137-163 the chain is on the cytoplasmic side; the sequence is DRSLAITRPLAMKNNGKLGQSMIGLAW. The chain crosses the membrane as a helical span at residues 164–183; it reads LLSGIFAGPQLYIFRMIHLA. The Extracellular portion of the chain corresponds to 184-211; that stretch reads DSSGQTEGFPQCVTHCSFPQWWHQAFYN. A helical membrane pass occupies residues 212–231; the sequence is FFTFSCLFIIPLFITLICNA. Over 232–280 the chain is Cytoplasmic; it reads KIIFTLTRVLHQDPHELQLNQSKNNIPRARLRTLKMTVAFATSFTVCWT. Residues 281-299 form a helical membrane-spanning segment; sequence PYYVLGIWYWFDPEMLNRV. Residues 300–305 lie on the Extracellular side of the membrane; the sequence is SDPVNH. The helical transmembrane segment at 306–325 threads the bilayer; the sequence is FFFLFALLNPCFDPLIYGYF. Over 326 to 327 the chain is Cytoplasmic; sequence SL.

The protein belongs to the G-protein coupled receptor 1 family.

It localises to the cell membrane. In terms of biological role, receptor for gonadotropin releasing hormone (GnRH) that mediates the action of GnRH to stimulate the secretion of the gonadotropic hormones luteinizing hormone (LH) and follicle-stimulating hormone (FSH). This receptor mediates its action by association with G-proteins that activate a phosphatidylinositol-calcium second messenger system. The protein is Gonadotropin-releasing hormone receptor (GNRHR) of Canis lupus familiaris (Dog).